Reading from the N-terminus, the 331-residue chain is HPr kinase/phosphorylase (331 aa).

Residues His153 and Lys174 contribute to the active site. 168–175 (GKSGLGKS) contacts ATP. Ser175 is a Mg(2+) binding site. Asp192 acts as the Proton acceptor; for phosphorylation activity. Proton donor; for dephosphorylation activity in catalysis. Residues 217-226 (MEIRGLGVVD) are important for the catalytic mechanism of both phosphorylation and dephosphorylation. Position 218 (Glu218) interacts with Mg(2+). Arg259 is a catalytic residue. Positions 280 to 285 (PIFPGK) are important for the catalytic mechanism of dephosphorylation.

Belongs to the HPrK/P family. Homohexamer. It depends on Mg(2+) as a cofactor.

It catalyses the reaction [HPr protein]-L-serine + ATP = [HPr protein]-O-phospho-L-serine + ADP + H(+). It carries out the reaction [HPr protein]-O-phospho-L-serine + phosphate + H(+) = [HPr protein]-L-serine + diphosphate. In terms of biological role, catalyzes the ATP- as well as the pyrophosphate-dependent phosphorylation of a specific serine residue in HPr, a phosphocarrier protein of the phosphoenolpyruvate-dependent sugar phosphotransferase system (PTS). HprK/P also catalyzes the pyrophosphate-producing, inorganic phosphate-dependent dephosphorylation (phosphorolysis) of seryl-phosphorylated HPr (P-Ser-HPr). The sequence is that of HPr kinase/phosphorylase from Pelodictyon phaeoclathratiforme (strain DSM 5477 / BU-1).